A 162-amino-acid chain; its full sequence is Shikimate kinase (162 aa).

11-16 contacts ATP; it reads GSGKSS. Ser15 contributes to the Mg(2+) binding site. Residues Asp33, Arg57, and Gly80 each coordinate substrate. Arg116 contributes to the ATP binding site. Arg132 contributes to the substrate binding site.

This sequence belongs to the shikimate kinase family. As to quaternary structure, monomer. The cofactor is Mg(2+).

It localises to the cytoplasm. It carries out the reaction shikimate + ATP = 3-phosphoshikimate + ADP + H(+). The protein operates within metabolic intermediate biosynthesis; chorismate biosynthesis; chorismate from D-erythrose 4-phosphate and phosphoenolpyruvate: step 5/7. Catalyzes the specific phosphorylation of the 3-hydroxyl group of shikimic acid using ATP as a cosubstrate. In Helicobacter pylori (strain P12), this protein is Shikimate kinase.